A 199-amino-acid polypeptide reads, in one-letter code: Homeobox protein ceh-19 (199 aa).

Residues 1–42 (MAFNIESLLEKKSNPVEEGNDFEEENDSEKNGEEDEEEEEKN) form a disordered region. Residues 18–40 (EGNDFEEENDSEKNGEEDEEEEE) show a composition bias toward acidic residues. The homeobox DNA-binding region spans 94-153 (ERKPRQAYSARQLDRLETEFQTDKYLSVNKRIQLSQTLNLTETQIKTWFQNRRTKWKKQL).

The protein localises to the nucleus. Its function is as follows. Probable transcription factor. Required for MC motor neuron differentiation and function, including role in modulating pharyngeal pumping. Regulates gene expression of FMRFamide-like neuropeptide flp-2 in MC motor neurons. May act downstream of transcription factor pha-4. The polypeptide is Homeobox protein ceh-19 (ceh-19) (Caenorhabditis elegans).